Here is a 399-residue protein sequence, read N- to C-terminus: CCA-adding enzyme (399 aa).

Residues glycine 32 and arginine 35 each contribute to the ATP site. Residues glycine 32 and arginine 35 each coordinate CTP. Positions 45 and 47 each coordinate Mg(2+). ATP contacts are provided by arginine 116, aspartate 159, arginine 162, arginine 165, and arginine 168. Residues arginine 116, aspartate 159, arginine 162, arginine 165, and arginine 168 each contribute to the CTP site.

This sequence belongs to the tRNA nucleotidyltransferase/poly(A) polymerase family. Bacterial CCA-adding enzyme type 3 subfamily. As to quaternary structure, homodimer. Mg(2+) serves as cofactor.

The enzyme catalyses a tRNA precursor + 2 CTP + ATP = a tRNA with a 3' CCA end + 3 diphosphate. It carries out the reaction a tRNA with a 3' CCA end + 2 CTP + ATP = a tRNA with a 3' CCACCA end + 3 diphosphate. Functionally, catalyzes the addition and repair of the essential 3'-terminal CCA sequence in tRNAs without using a nucleic acid template. Adds these three nucleotides in the order of C, C, and A to the tRNA nucleotide-73, using CTP and ATP as substrates and producing inorganic pyrophosphate. tRNA 3'-terminal CCA addition is required both for tRNA processing and repair. Also involved in tRNA surveillance by mediating tandem CCA addition to generate a CCACCA at the 3' terminus of unstable tRNAs. While stable tRNAs receive only 3'-terminal CCA, unstable tRNAs are marked with CCACCA and rapidly degraded. The sequence is that of CCA-adding enzyme from Streptococcus sanguinis (strain SK36).